The primary structure comprises 3902 residues: Mediator of RNA polymerase II transcription subunit 12 (3902 aa).

Disordered stretches follow at residues 414–576 (ESLT…EELP), 619–674 (FEPF…NPKL), 694–940 (AFDP…LEAL), 977–1029 (VVEK…PEPP), 1812–1831 (TSHK…TETR), 2463–2675 (TVEP…NRKQ), 2719–2771 (AGAS…SSSM), 2876–3151 (RIME…PEMQ), 3195–3549 (LQAG…SSNQ), and 3563–3902 (AGLN…QQQY). Acidic residues predominate over residues 420-430 (EPEEDPEEGPE). Pro residues predominate over residues 709-721 (PTPPEAPPPPPPV). Basic and acidic residues-rich tracts occupy residues 740–802 (EDGK…EHLN), 912–928 (KAGD…KKPD), 977–1004 (VVEK…EKLP), and 1018–1027 (KTPEKPKTPE). Positions 1812 to 1824 (TSHKTKDVKRKSA) are enriched in basic residues. The required for nuclear localization stretch occupies residues 2409-3902 (QTTRLDKVAK…MGQFPNQQQY (1494 aa)). The span at 2474-2547 (AAVKKPEEET…VTAKDTEKDT (74 aa)) shows a compositional bias: basic and acidic residues. Residues 2480–2526 (EEETAEKKKDEAKKADEKTTKADDEKKKDETADAKKDNEKQKEEKDK) are a coiled coil. Composition is skewed to low complexity over residues 2548-2566 (AAPT…AAPD), 2614-2632 (SRAN…SSTT), and 2734-2748 (PHPG…QHQG). Positions 2876–2979 (RIMEEQRILR…ERLERERVAR (104 aa)) are enriched in basic and acidic residues. Low complexity-rich tracts occupy residues 2980-3001 (EALA…QAQQ), 3010-3143 (QQQR…QRNP), 3196-3205 (QAGQAAGQQQ), and 3226-3236 (PQQQQQQPQQP). Positions 3237–3248 (GTSQIPNTTPTR) are enriched in polar residues. Composition is skewed to low complexity over residues 3250-3275 (ANPM…GQPG), 3284-3295 (GQQQQNQFQRQG), and 3317-3389 (GQQQ…FGRQ). Positions 3391 to 3409 (APNQENFQQQPGFNQNAAG) are enriched in polar residues. 3 stretches are compositionally biased toward low complexity: residues 3410–3446 (QNYQ…QQQN), 3454–3539 (QSQQ…QGNQ), and 3570–3619 (SSGN…RPGM). Gly residues predominate over residues 3620–3649 (GQQGMGQQGMGQQGGMGQSGRGQPGMGGQS). Low complexity-rich tracts occupy residues 3663-3700 (MGQP…QQQH), 3710-3742 (QQGR…QQAQ), and 3760-3830 (QQQQ…HRGQ). Positions 3831–3841 (GQQGHGMGGAG) are enriched in gly residues. Over residues 3842–3888 (QQHQQVPQQQQNQYFQPQQQQDQRMQQQPGGQQQQQQGQSGQQQNNQ) the composition is skewed to low complexity. Positions 3889 to 3902 (HYNNMGQFPNQQQY) are enriched in polar residues.

The protein belongs to the Mediator complex subunit 12 family. As to quaternary structure, component of the Mediator complex.

The protein localises to the nucleus. Component of the Mediator complex, a coactivator involved in regulated gene transcription of nearly all RNA polymerase II-dependent genes. Mediator functions as a bridge to convey information from gene-specific regulatory proteins to the basal RNA polymerase II transcription machinery. Mediator is recruited to promoters by direct interactions with regulatory proteins and serves as a scaffold for the assembly of a functional preinitiation complex with RNA polymerase II and the general transcription factors. The protein is Mediator of RNA polymerase II transcription subunit 12 (dpy-22) of Caenorhabditis briggsae.